Reading from the N-terminus, the 248-residue chain is ATP synthase subunit a (248 aa).

The propeptide at 1–3 is removed in mature form; sequence MLY. 7 helical membrane-spanning segments follow: residues 24 to 44, 86 to 106, 117 to 137, 146 to 166, 183 to 203, 205 to 225, and 227 to 247; these read MSLT…FFIF, IYMP…LVGL, FALP…IGFV, VLLP…VELL, ITSG…TSGI, LLFV…ELIV, and ILQA…SLIL.

This sequence belongs to the ATPase A chain family. F-type ATPases have 2 components, CF(1) - the catalytic core - and CF(0) - the membrane proton channel. CF(1) has five subunits: alpha(3), beta(3), gamma(1), delta(1), epsilon(1). CF(0) has three main subunits: a, b and c.

It is found in the mitochondrion inner membrane. In terms of biological role, mitochondrial membrane ATP synthase (F(1)F(0) ATP synthase or Complex V) produces ATP from ADP in the presence of a proton gradient across the membrane which is generated by electron transport complexes of the respiratory chain. F-type ATPases consist of two structural domains, F(1) - containing the extramembraneous catalytic core and F(0) - containing the membrane proton channel, linked together by a central stalk and a peripheral stalk. During catalysis, ATP synthesis in the catalytic domain of F(1) is coupled via a rotary mechanism of the central stalk subunits to proton translocation. Key component of the proton channel; it may play a direct role in the translocation of protons across the membrane. The polypeptide is ATP synthase subunit a (Zancudomyces culisetae (Gut fungus)).